A 259-amino-acid chain; its full sequence is Phosphoribosylaminoimidazole-succinocarboxamide synthase (259 aa).

Belongs to the SAICAR synthetase family.

The enzyme catalyses 5-amino-1-(5-phospho-D-ribosyl)imidazole-4-carboxylate + L-aspartate + ATP = (2S)-2-[5-amino-1-(5-phospho-beta-D-ribosyl)imidazole-4-carboxamido]succinate + ADP + phosphate + 2 H(+). It functions in the pathway purine metabolism; IMP biosynthesis via de novo pathway; 5-amino-1-(5-phospho-D-ribosyl)imidazole-4-carboxamide from 5-amino-1-(5-phospho-D-ribosyl)imidazole-4-carboxylate: step 1/2. This is Phosphoribosylaminoimidazole-succinocarboxamide synthase from Hyphomonas neptunium (strain ATCC 15444).